Consider the following 44-residue polypeptide: MATQNPNQPVTYPIFTVRWLAVHTLAVPSVFFVGAIAAMQFIQR.

Residues 17 to 41 (VRWLAVHTLAVPSVFFVGAIAAMQF) traverse the membrane as a helical segment. Residues Arg-18 and His-23 each contribute to the heme site.

It belongs to the PsbE/PsbF family. Heterodimer of an alpha subunit and a beta subunit. PSII is composed of 1 copy each of membrane proteins PsbA, PsbB, PsbC, PsbD, PsbE, PsbF, PsbH, PsbI, PsbJ, PsbK, PsbL, PsbM, PsbT, PsbX, PsbY, PsbZ, Psb30/Ycf12, peripheral proteins PsbO, CyanoQ (PsbQ), PsbU, PsbV and a large number of cofactors. It forms dimeric complexes. The cofactor is heme b.

Its subcellular location is the cellular thylakoid membrane. This b-type cytochrome is tightly associated with the reaction center of photosystem II (PSII). PSII is a light-driven water:plastoquinone oxidoreductase that uses light energy to abstract electrons from H(2)O, generating O(2) and a proton gradient subsequently used for ATP formation. It consists of a core antenna complex that captures photons, and an electron transfer chain that converts photonic excitation into a charge separation. The protein is Cytochrome b559 subunit beta of Synechocystis sp. (strain ATCC 27184 / PCC 6803 / Kazusa).